Consider the following 456-residue polypeptide: Antizyme inhibitor 2 (456 aa).

Cys-357 (proton donor; shared with dimeric partner) is an active-site residue.

This sequence belongs to the Orn/Lys/Arg decarboxylase class-II family. ODC antizyme inhibitor subfamily. As to quaternary structure, monomer. Interacts with OAZ1; this interaction disrupts the interaction between the antizyme and ODC1. Does not form a heterodimer with ODC1.

It is found in the nucleus. Its subcellular location is the cytoplasm. The protein resides in the perinuclear region. The protein localises to the membrane. It localises to the cytoplasmic vesicle. It is found in the endoplasmic reticulum-Golgi intermediate compartment. Its subcellular location is the golgi apparatus. The protein resides in the cis-Golgi network. The protein localises to the trans-Golgi network. It localises to the cytoplasmic granule. It is found in the cell projection. Its subcellular location is the axon. The protein resides in the dendrite. The protein localises to the perikaryon. Antizyme inhibitor (AZI) protein that positively regulates ornithine decarboxylase (ODC) activity and polyamine uptake. AZI is an enzymatically inactive ODC homolog that counteracts the negative effect of ODC antizyme (AZ) on ODC activity by competing with ODC for antizyme-binding. Inhibits antizyme-dependent ODC degradation and releases ODC monomers from their inactive complex with antizymes, leading to formation of the catalytically active ODC homodimer and restoring polyamine production. Participates in the morphological integrity of the trans-Golgi network (TGN) and functions as a regulator of intracellular secretory vesicle trafficking. The chain is Antizyme inhibitor 2 (azin2) from Xenopus laevis (African clawed frog).